The sequence spans 114 residues: uncharacterized protein (114 aa).

The next 2 helical transmembrane spans lie at 9–29 and 75–95; these read LAIF…SFWL and LVHF…VAII.

The protein localises to the cell membrane. This is an uncharacterized protein from Mycoplasma pneumoniae (strain ATCC 29342 / M129 / Subtype 1) (Mycoplasmoides pneumoniae).